The sequence spans 371 residues: DNA replication and repair protein RecF (371 aa).

30–37 (GANAQGKT) is a binding site for ATP.

This sequence belongs to the RecF family.

The protein resides in the cytoplasm. Functionally, the RecF protein is involved in DNA metabolism; it is required for DNA replication and normal SOS inducibility. RecF binds preferentially to single-stranded, linear DNA. It also seems to bind ATP. This chain is DNA replication and repair protein RecF, found in Lacticaseibacillus paracasei (strain ATCC 334 / BCRC 17002 / CCUG 31169 / CIP 107868 / KCTC 3260 / NRRL B-441) (Lactobacillus paracasei).